Here is a 560-residue protein sequence, read N- to C-terminus: MSYERKYAEALSRVIGEELTIDQIEALIEKPKHEAHGDLAFPCFQLAKAYRKAPVMIATDIANELNDELFTKVEAAGPYVNVFLSRDVVSKEIINTVLEEKSEYATHEARNETIVTDFSSPNIAKPFSMGHLRSTVIGNAINQIARKNGYDVVGVNHLGDWGTQFGKLMVAYKKWGDEEAVRANPIAELLKLYVHFHEEAKTQPELEDEGRAWFKKLEDGDAEATELWQWFRDESLKEFQKVYDLLGVKFESFNGEAFYNDKMGRVVEMLEAKNLLVESEGAMVVSLEEENLPPCLIKKKDGATLYATRDLAAAIYRYETYNFVQANYVVGGEQALHFKQLFSVLRKLGYDFVDGMHHVPFGLILQEGKKMSTRKGRIVLLEEVLKEAIEKAQANIEQKNPDLANAQDVARMVGVGAVVFHDLKNERINNIEFDLDSMLKFEGETGPYVQYTNARANSLLRKGNYDGSPFTGADDDYSWGVVTMLNAFPHVITRAHERREPSIISRYVLDLAQAFNKYYGHVRVLEEDAGKQSRLALVKAVTLVLTEGLRLLGVEAPEEM.

The 'HIGH' region signature appears at 121 to 131; sequence PNIAKPFSMGH.

The protein belongs to the class-I aminoacyl-tRNA synthetase family. Monomer.

The protein localises to the cytoplasm. The enzyme catalyses tRNA(Arg) + L-arginine + ATP = L-arginyl-tRNA(Arg) + AMP + diphosphate. The sequence is that of Arginine--tRNA ligase from Exiguobacterium sp. (strain ATCC BAA-1283 / AT1b).